Reading from the N-terminus, the 157-residue chain is Protein NrdI (157 aa).

The protein belongs to the NrdI family.

Functionally, probably involved in ribonucleotide reductase function. This is Protein NrdI from Mycoplasma mycoides subsp. mycoides SC (strain CCUG 32753 / NCTC 10114 / PG1).